We begin with the raw amino-acid sequence, 208 residues long: Methylthioribulose-1-phosphate dehydratase (208 aa).

H101 and H103 together coordinate Zn(2+).

Belongs to the aldolase class II family. MtnB subfamily. Requires Zn(2+) as cofactor.

The catalysed reaction is 5-(methylsulfanyl)-D-ribulose 1-phosphate = 5-methylsulfanyl-2,3-dioxopentyl phosphate + H2O. It functions in the pathway amino-acid biosynthesis; L-methionine biosynthesis via salvage pathway; L-methionine from S-methyl-5-thio-alpha-D-ribose 1-phosphate: step 2/6. Catalyzes the dehydration of methylthioribulose-1-phosphate (MTRu-1-P) into 2,3-diketo-5-methylthiopentyl-1-phosphate (DK-MTP-1-P). The chain is Methylthioribulose-1-phosphate dehydratase from Gluconobacter oxydans (strain 621H) (Gluconobacter suboxydans).